Consider the following 174-residue polypeptide: Vimentin-type intermediate filament-associated coiled-coil protein (174 aa).

Positions 7 to 97 form a coiled coil; that stretch reads LQIREANAHL…DQRDQMIQQL (91 aa). A disordered region spans residues 128–174; it reads GPLPASHSHRAQLLPDGPGPPLGNNMGKEEGQDDQDDQQPAVFGTTV.

It is found in the cytoplasm. The protein is Vimentin-type intermediate filament-associated coiled-coil protein (Vmac) of Mus musculus (Mouse).